The following is a 299-amino-acid chain: ATP phosphoribosyltransferase (299 aa).

It belongs to the ATP phosphoribosyltransferase family. Long subfamily. In terms of assembly, equilibrium between an active dimeric form, an inactive hexameric form and higher aggregates. Interconversion between the various forms is largely reversible and is influenced by the natural substrates and inhibitors of the enzyme. Requires Mg(2+) as cofactor.

It localises to the cytoplasm. It catalyses the reaction 1-(5-phospho-beta-D-ribosyl)-ATP + diphosphate = 5-phospho-alpha-D-ribose 1-diphosphate + ATP. Its pathway is amino-acid biosynthesis; L-histidine biosynthesis; L-histidine from 5-phospho-alpha-D-ribose 1-diphosphate: step 1/9. Feedback inhibited by histidine. Catalyzes the condensation of ATP and 5-phosphoribose 1-diphosphate to form N'-(5'-phosphoribosyl)-ATP (PR-ATP). Has a crucial role in the pathway because the rate of histidine biosynthesis seems to be controlled primarily by regulation of HisG enzymatic activity. The chain is ATP phosphoribosyltransferase from Escherichia coli O81 (strain ED1a).